Here is a 157-residue protein sequence, read N- to C-terminus: Cytochrome c-type biogenesis protein CcmE (157 aa).

Residues 1-8 (MNPLRRKR) are Cytoplasmic-facing. A helical; Signal-anchor for type II membrane protein membrane pass occupies residues 9-29 (LLIILAVLGGVGLALTLALSA). Topologically, residues 30-157 (LKENINLFYT…ASMPARQADR (128 aa)) are periplasmic. His124 and Tyr128 together coordinate heme. A disordered region spans residues 132–157 (EVSKALRESGQATPAPASMPARQADR).

The protein belongs to the CcmE/CycJ family.

The protein localises to the cell inner membrane. Its function is as follows. Heme chaperone required for the biogenesis of c-type cytochromes. Transiently binds heme delivered by CcmC and transfers the heme to apo-cytochromes in a process facilitated by CcmF and CcmH. In Pseudomonas syringae pv. tomato (strain ATCC BAA-871 / DC3000), this protein is Cytochrome c-type biogenesis protein CcmE.